The following is a 513-amino-acid chain: Catalase (513 aa).

The signal sequence occupies residues 1 to 30 (MNPSLNAFRPGRLLVAASLTASLLSLSVQA). Residues His-81 and Asn-153 contribute to the active site. Tyr-361 contacts heme. Residues 391–407 (DGALNAGHSTSGVNYQP) show a composition bias toward polar residues. The tract at residues 391–413 (DGALNAGHSTSGVNYQPSRLDPR) is disordered.

It belongs to the catalase family. Requires heme as cofactor.

The protein localises to the periplasm. The enzyme catalyses 2 H2O2 = O2 + 2 H2O. Decomposes hydrogen peroxide into water and oxygen; serves to protect cells from the toxic effects of hydrogen peroxide. The polypeptide is Catalase (katB) (Pseudomonas aeruginosa (strain ATCC 15692 / DSM 22644 / CIP 104116 / JCM 14847 / LMG 12228 / 1C / PRS 101 / PAO1)).